The sequence spans 191 residues: Fe/S biogenesis protein NfuA (191 aa).

Cysteine 149 and cysteine 152 together coordinate [4Fe-4S] cluster.

Belongs to the NfuA family. In terms of assembly, homodimer. It depends on [4Fe-4S] cluster as a cofactor.

Involved in iron-sulfur cluster biogenesis. Binds a 4Fe-4S cluster, can transfer this cluster to apoproteins, and thereby intervenes in the maturation of Fe/S proteins. Could also act as a scaffold/chaperone for damaged Fe/S proteins. This chain is Fe/S biogenesis protein NfuA, found in Klebsiella pneumoniae (strain 342).